The chain runs to 340 residues: CRISPR-associated protein Cas7 (340 aa).

Component of the Cascade-like complex (Cascade I-B), composed of Cas5, Cas6, Cas7 and crRNA.

Its subcellular location is the cytoplasm. In terms of biological role, CRISPR (clustered regularly interspaced short palindromic repeat) is an adaptive immune system that provides protection against mobile genetic elements (viruses, transposable elements and conjugative plasmids). CRISPR clusters contain sequences complementary to antecedent mobile elements and target invading nucleic acids. CRISPR clusters are transcribed and processed into CRISPR RNA (crRNA). Plasmid targeted by CRISPR locus P1 transform wild-type cells very poorly. This protein helps process or stabilize pre-crRNA into individual crRNA units, in vivo Cas6 and Cas7 are also required for optimal crRNA processing and/or stability. The chain is CRISPR-associated protein Cas7 from Haloferax volcanii (strain ATCC 29605 / DSM 3757 / JCM 8879 / NBRC 14742 / NCIMB 2012 / VKM B-1768 / DS2) (Halobacterium volcanii).